Consider the following 153-residue polypeptide: Putative pre-16S rRNA nuclease (153 aa).

This sequence belongs to the YqgF nuclease family.

It localises to the cytoplasm. Could be a nuclease involved in processing of the 5'-end of pre-16S rRNA. This chain is Putative pre-16S rRNA nuclease, found in Prochlorococcus marinus (strain AS9601).